We begin with the raw amino-acid sequence, 80 residues long: MKKIVLTLINFYRKYISPSKPPTCRFTPTCSAYTFEAVQRFGVFKGLLLGTWRILRCNPFNKGGYDPVPEEFKLLRRNTK.

This sequence belongs to the UPF0161 family.

It is found in the cell inner membrane. In terms of biological role, could be involved in insertion of integral membrane proteins into the membrane. The sequence is that of Putative membrane protein insertion efficiency factor from Kosmotoga olearia (strain ATCC BAA-1733 / DSM 21960 / TBF 19.5.1).